Here is a 448-residue protein sequence, read N- to C-terminus: Chromosomal replication initiator protein DnaA (448 aa).

Residues 1–73 form a domain I, interacts with DnaA modulators region; sequence MSTHLTETWE…VNALKLLTSK (73 aa). A domain II region spans residues 73–109; that stretch reads KKYNIDFIVTTEEKIEENEKNHNNEKSNIVVNDEMST. The domain III, AAA+ region stretch occupies residues 110–326; it reads MLNPKYTFDS…GALIRIVAFS (217 aa). The ATP site is built by glycine 154, glycine 156, lysine 157, and threonine 158. The domain IV, binds dsDNA stretch occupies residues 327 to 448; sequence SLTNKEISVD…NELNKRINQK (122 aa).

Belongs to the DnaA family. In terms of assembly, oligomerizes as a right-handed, spiral filament on DNA at oriC.

It localises to the cytoplasm. In terms of biological role, plays an essential role in the initiation and regulation of chromosomal replication. ATP-DnaA binds to the origin of replication (oriC) to initiate formation of the DNA replication initiation complex once per cell cycle. Binds the DnaA box (a 9 base pair repeat at the origin) and separates the double-stranded (ds)DNA. Forms a right-handed helical filament on oriC DNA; dsDNA binds to the exterior of the filament while single-stranded (ss)DNA is stabiized in the filament's interior. The ATP-DnaA-oriC complex binds and stabilizes one strand of the AT-rich DNA unwinding element (DUE), permitting loading of DNA polymerase. After initiation quickly degrades to an ADP-DnaA complex that is not apt for DNA replication. Binds acidic phospholipids. This Clostridium botulinum (strain 657 / Type Ba4) protein is Chromosomal replication initiator protein DnaA.